The primary structure comprises 109 residues: Nascent polypeptide-associated complex protein (109 aa).

The region spanning 3–69 is the NAC-A/B domain; that stretch reads PMNPKQLKKL…TEEERVVLKI (67 aa).

It belongs to the NAC-alpha family. As to quaternary structure, homodimer. Interacts with the ribosome. Binds ribosomal RNA.

Functionally, contacts the emerging nascent chain on the ribosome. In Pyrococcus abyssi (strain GE5 / Orsay), this protein is Nascent polypeptide-associated complex protein.